Reading from the N-terminus, the 160-residue chain is Probable chemoreceptor glutamine deamidase CheD 1 (160 aa).

It belongs to the CheD family.

It carries out the reaction L-glutaminyl-[protein] + H2O = L-glutamyl-[protein] + NH4(+). In terms of biological role, probably deamidates glutamine residues to glutamate on methyl-accepting chemotaxis receptors (MCPs), playing an important role in chemotaxis. In Syntrophus aciditrophicus (strain SB), this protein is Probable chemoreceptor glutamine deamidase CheD 1.